Here is a 483-residue protein sequence, read N- to C-terminus: Aspartyl/glutamyl-tRNA(Asn/Gln) amidotransferase subunit B (483 aa).

Belongs to the GatB/GatE family. GatB subfamily. In terms of assembly, heterotrimer of A, B and C subunits.

It carries out the reaction L-glutamyl-tRNA(Gln) + L-glutamine + ATP + H2O = L-glutaminyl-tRNA(Gln) + L-glutamate + ADP + phosphate + H(+). The enzyme catalyses L-aspartyl-tRNA(Asn) + L-glutamine + ATP + H2O = L-asparaginyl-tRNA(Asn) + L-glutamate + ADP + phosphate + 2 H(+). Allows the formation of correctly charged Asn-tRNA(Asn) or Gln-tRNA(Gln) through the transamidation of misacylated Asp-tRNA(Asn) or Glu-tRNA(Gln) in organisms which lack either or both of asparaginyl-tRNA or glutaminyl-tRNA synthetases. The reaction takes place in the presence of glutamine and ATP through an activated phospho-Asp-tRNA(Asn) or phospho-Glu-tRNA(Gln). This is Aspartyl/glutamyl-tRNA(Asn/Gln) amidotransferase subunit B from Rickettsia canadensis (strain McKiel).